The following is a 249-amino-acid chain: 4-hydroxy-tetrahydrodipicolinate reductase (249 aa).

NAD(+) contacts are provided by residues 8–13, 87–89, and 111–114; these read GVTGQM, GTT, and ATNF. His-143 serves as the catalytic Proton donor/acceptor. Position 144 (His-144) interacts with (S)-2,3,4,5-tetrahydrodipicolinate. Lys-147 acts as the Proton donor in catalysis. 153 to 154 lines the (S)-2,3,4,5-tetrahydrodipicolinate pocket; the sequence is GT.

Belongs to the DapB family.

Its subcellular location is the cytoplasm. It carries out the reaction (S)-2,3,4,5-tetrahydrodipicolinate + NAD(+) + H2O = (2S,4S)-4-hydroxy-2,3,4,5-tetrahydrodipicolinate + NADH + H(+). The catalysed reaction is (S)-2,3,4,5-tetrahydrodipicolinate + NADP(+) + H2O = (2S,4S)-4-hydroxy-2,3,4,5-tetrahydrodipicolinate + NADPH + H(+). It participates in amino-acid biosynthesis; L-lysine biosynthesis via DAP pathway; (S)-tetrahydrodipicolinate from L-aspartate: step 4/4. Its function is as follows. Catalyzes the conversion of 4-hydroxy-tetrahydrodipicolinate (HTPA) to tetrahydrodipicolinate. The chain is 4-hydroxy-tetrahydrodipicolinate reductase from Haloarcula marismortui (strain ATCC 43049 / DSM 3752 / JCM 8966 / VKM B-1809) (Halobacterium marismortui).